The primary structure comprises 135 residues: Large ribosomal subunit protein bL17 (135 aa).

It belongs to the bacterial ribosomal protein bL17 family. In terms of assembly, part of the 50S ribosomal subunit. Contacts protein L32.

The protein is Large ribosomal subunit protein bL17 of Listeria monocytogenes serotype 4b (strain CLIP80459).